The chain runs to 94 residues: Cell division topological specificity factor (94 aa).

Belongs to the MinE family.

In terms of biological role, prevents the cell division inhibition by proteins MinC and MinD at internal division sites while permitting inhibition at polar sites. This ensures cell division at the proper site by restricting the formation of a division septum at the midpoint of the long axis of the cell. The protein is Cell division topological specificity factor of Synechococcus sp. (strain CC9311).